The following is a 325-amino-acid chain: MNALTAVQNNAVDSGQDYSGFTLIPSAQSPRLLELTFTEQTTKQFLEQVAEWPVQALEYKSFLRFRVGKILDDLCANQLQPLLLKTLLNRAEGALLINAVGIDDVAQADEMVKLATAVAHLIGRSNFDAMSGQYYARFVVKNVDNSDSYLRQPHRVMELHNDGTYVEEITDYVLMMKIDEQNMQGGNSLLLHLDDWEHLDHFFRHPLARRPMRFAAPPSKNVSKDVFHPVFDVDQQGRPVMRYIDQFVQPKDFEEGVWLSELSDAIETSKGILSVPVPVGKFLLINNLFWLHGRDRFTPHPDLRRELMRQRGYFAYATHHYQTHQ.

The Fe cation site is built by His160, Asp162, and His292.

It belongs to the glutarate hydroxylase family. Homotetramer. The cofactor is Fe(2+).

It carries out the reaction glutarate + 2-oxoglutarate + O2 = (S)-2-hydroxyglutarate + succinate + CO2. The protein operates within amino-acid degradation. In terms of biological role, acts as an alpha-ketoglutarate-dependent dioxygenase catalyzing hydroxylation of glutarate (GA) to L-2-hydroxyglutarate (L2HG). Functions in a L-lysine degradation pathway that proceeds via cadaverine, glutarate and L-2-hydroxyglutarate. This is Glutarate 2-hydroxylase from Escherichia coli O6:H1 (strain CFT073 / ATCC 700928 / UPEC).